The primary structure comprises 202 residues: ATP-dependent Clp protease proteolytic subunit (202 aa).

Ser-101 (nucleophile) is an active-site residue. His-126 is a catalytic residue.

This sequence belongs to the peptidase S14 family. As to quaternary structure, component of the chloroplastic Clp protease core complex.

It is found in the plastid. The protein localises to the chloroplast stroma. It catalyses the reaction Hydrolysis of proteins to small peptides in the presence of ATP and magnesium. alpha-casein is the usual test substrate. In the absence of ATP, only oligopeptides shorter than five residues are hydrolyzed (such as succinyl-Leu-Tyr-|-NHMec, and Leu-Tyr-Leu-|-Tyr-Trp, in which cleavage of the -Tyr-|-Leu- and -Tyr-|-Trp bonds also occurs).. In terms of biological role, cleaves peptides in various proteins in a process that requires ATP hydrolysis. Has a chymotrypsin-like activity. Plays a major role in the degradation of misfolded proteins. In Drimys granadensis, this protein is ATP-dependent Clp protease proteolytic subunit.